We begin with the raw amino-acid sequence, 251 residues long: Triosephosphate isomerase (251 aa).

9–11 (NWK) is a binding site for substrate. The active-site Electrophile is His95. Catalysis depends on Glu167, which acts as the Proton acceptor. Substrate is bound by residues Gly173, Ser213, and 234–235 (GG).

It belongs to the triosephosphate isomerase family. In terms of assembly, homodimer.

The protein localises to the cytoplasm. It catalyses the reaction D-glyceraldehyde 3-phosphate = dihydroxyacetone phosphate. The protein operates within carbohydrate biosynthesis; gluconeogenesis. It functions in the pathway carbohydrate degradation; glycolysis; D-glyceraldehyde 3-phosphate from glycerone phosphate: step 1/1. In terms of biological role, involved in the gluconeogenesis. Catalyzes stereospecifically the conversion of dihydroxyacetone phosphate (DHAP) to D-glyceraldehyde-3-phosphate (G3P). The sequence is that of Triosephosphate isomerase from Trichlorobacter lovleyi (strain ATCC BAA-1151 / DSM 17278 / SZ) (Geobacter lovleyi).